The following is a 215-amino-acid chain: Histone H1.1 (215 aa).

A disordered region spans residues 1-43 (MSETVPPAPAASAAPEKPLAGKKAKKPAKAAAASKKKPAGPSV). S2 is subject to N-acetylserine. Residues S2 and S12 each carry the phosphoserine modification. Position 17 is an N6-acetyllysine (K17). Positions 20 to 38 (AGKKAKKPAKAAAASKKKP) are enriched in basic residues. K37 is modified (N6-(beta-hydroxybutyryl)lysine). The 74-residue stretch at 39 to 112 (AGPSVSELIV…GASGSFKLNK (74 aa)) folds into the H15 domain. Residue S44 is modified to Phosphoserine. Residue K55 is modified to N6-(beta-hydroxybutyryl)lysine. R57 carries the post-translational modification Citrulline. An N6-(beta-hydroxybutyryl)lysine modification is found at K67. Position 78 is an N6-acetyllysine (K78). Position 88 is an N6-(beta-hydroxybutyryl)lysine (K88). At K93 the chain carries N6-(beta-hydroxybutyryl)lysine; alternate. K93 is modified (N6-acetyllysine; alternate). The interval 94–215 (GTLVQTKGTG…KPKKAAPKKK (122 aa)) is disordered. The residue at position 107 (S107) is a Phosphoserine. Position 109 is an N6-(beta-hydroxybutyryl)lysine (K109). The span at 122-147 (GASKVATKTKATGASKKLKKATGASK) shows a compositional bias: low complexity. K125 carries the post-translational modification N6-acetyllysine. Basic residues-rich tracts occupy residues 148 to 181 (KSVK…KKVA) and 188 to 215 (KAVK…PKKK). The residue at position 204 (T204) is a Phosphothreonine.

Belongs to the histone H1/H5 family. Interacts with DFFB. Post-translationally, H1 histones are progressively phosphorylated during the cell cycle, becoming maximally phosphorylated during late G2 phase and M phase, and being dephosphorylated sharply thereafter. Citrullination at Arg-57 (H1R54ci) by PADI4 takes place within the DNA-binding site of H1 and results in its displacement from chromatin and global chromatin decondensation, thereby promoting pluripotency and stem cell maintenance.

The protein resides in the nucleus. It is found in the chromosome. Histone H1 protein binds to linker DNA between nucleosomes forming the macromolecular structure known as the chromatin fiber. Histones H1 are necessary for the condensation of nucleosome chains into higher-order structured fibers. Also acts as a regulator of individual gene transcription through chromatin remodeling, nucleosome spacing and DNA methylation. The chain is Histone H1.1 from Homo sapiens (Human).